A 178-amino-acid chain; its full sequence is Cytochrome b6-f complex iron-sulfur subunit 2 (178 aa).

Residues leucine 17 to proline 36 form a helical membrane-spanning segment. The 101-residue stretch at glycine 61–isoleucine 161 folds into the Rieske domain. The [2Fe-2S] cluster site is built by cysteine 107, histidine 109, cysteine 125, and histidine 128. Cysteine 112 and cysteine 127 form a disulfide bridge.

Belongs to the Rieske iron-sulfur protein family. As to quaternary structure, the 4 large subunits of the cytochrome b6-f complex are cytochrome b6, subunit IV (17 kDa polypeptide, PetD), cytochrome f and the Rieske protein, while the 4 small subunits are PetG, PetL, PetM and PetN. The complex functions as a dimer. Requires [2Fe-2S] cluster as cofactor.

The protein resides in the cellular thylakoid membrane. It carries out the reaction 2 oxidized [plastocyanin] + a plastoquinol + 2 H(+)(in) = 2 reduced [plastocyanin] + a plastoquinone + 4 H(+)(out). Its function is as follows. Component of the cytochrome b6-f complex, which mediates electron transfer between photosystem II (PSII) and photosystem I (PSI), cyclic electron flow around PSI, and state transitions. The polypeptide is Cytochrome b6-f complex iron-sulfur subunit 2 (Nostoc sp. (strain PCC 7120 / SAG 25.82 / UTEX 2576)).